The sequence spans 180 residues: Molybdopterin synthase catalytic subunit (180 aa).

A compositionally biased stretch (polar residues) spans 1 to 10; that stretch reads MSSTTPTTEP. Positions 1 to 31 are disordered; sequence MSSTTPTTEPDQLPPHLDPQTYPRTTTNPTL. Over residues 21–31 the composition is skewed to low complexity; that stretch reads TYPRTTTNPTL. Substrate contacts are provided by residues 131-132, K147, and 154-156; these read HR and KKE.

The protein belongs to the MoaE family. MOCS2B subfamily. Heterotetramer; composed of 2 small (MOCS2A) and 2 large (MOCS2B) subunits.

The protein resides in the cytoplasm. The enzyme catalyses 2 [molybdopterin-synthase sulfur-carrier protein]-C-terminal-Gly-aminoethanethioate + cyclic pyranopterin phosphate + H2O = molybdopterin + 2 [molybdopterin-synthase sulfur-carrier protein]-C-terminal Gly-Gly + 2 H(+). Its pathway is cofactor biosynthesis; molybdopterin biosynthesis. Functionally, catalytic subunit of the molybdopterin synthase complex, a complex that catalyzes the conversion of precursor Z into molybdopterin. Acts by mediating the incorporation of 2 sulfur atoms from thiocarboxylated MOCS2A into precursor Z to generate a dithiolene group. The sequence is that of Molybdopterin synthase catalytic subunit from Aspergillus niger (strain ATCC MYA-4892 / CBS 513.88 / FGSC A1513).